The primary structure comprises 522 residues: Serine/threonine protein phosphatase 2A 59 kDa regulatory subunit B' gamma isoform (522 aa).

A disordered region spans residues 1 to 74; that stretch reads MIKQIFGKLP…SSTSSNRTNQ (74 aa). Positions 35–58 are enriched in low complexity; sequence PNSGISSISKPSSKSSASNSNGAN. Residues 63–74 show a composition bias toward polar residues; the sequence is APSSTSSNRTNQ.

It belongs to the phosphatase 2A regulatory subunit B56 family. In terms of assembly, PP2A consists of a common heteromeric enzyme, composed of a catalytic subunit (subunits C), a constant regulatory subunit (subunit A), and a variety of regulatory subunits such as subunits B (the R2/B/PR55/B55, R3/B''/PR72/PR130/PR59 and R5/B'/B56 families). Interacts with BRI1. Interacts with IGMT1 and IGMT4. Interacts with ACO3 in the cytosol. In terms of tissue distribution, expressed ubiquitously at low levels. Expressed in roots, emerging lateral roots, cotyledons, leaves, floral stalks and flowers.

The protein resides in the cytoplasm. The protein localises to the cytosol. It localises to the nucleus. In terms of biological role, the B regulatory subunit may modulate substrate selectivity and catalytic activity, and may also direct the localization of the catalytic enzyme to a particular subcellular compartment. Required for the formation of the PP2A holoenzyme that negatively regulates brassinosteroid signaling by dephosphorylating and inactivating BRI1 in the cytoplasm. Seems to be functionally connected with CPR5 and may mediate the negative regulation of defense reactions and senescence under low irradiances. May contribute to the epigenetic regulation of defense gene expression. Involved in the control of methoxylation of indole glucosinolates and formation of 4-methoxy- indol-3-yl-methyl glucosinolate in leaves, through direct interaction with indole glucosinolate methyltransferases. Involved in growth regulation and stress signaling. Involved in the regulation of reactive oxygen species (ROS) signaling and maintenance of cellular ROS homeostasis. Required to control the level of ACO3 phosphorylation in the cytoplasm. Regulates hydrogen peroxide metabolism by controlling the abundance of AOX1A and AXO3/AOX1D in leaf mitochondria. May mediate dephosphorylation of CRT1 and promote the degradation of unfolded proteins in endoplasmic reticulum (ER). Involved in the regulation of flowering time by repressing FLC, the main flowering repressor gene. This Arabidopsis thaliana (Mouse-ear cress) protein is Serine/threonine protein phosphatase 2A 59 kDa regulatory subunit B' gamma isoform (B'GAMMA).